A 269-amino-acid chain; its full sequence is Protein MGF 360-15R (269 aa).

The protein belongs to the asfivirus MGF 360 family.

Functionally, plays a role in virus cell tropism, and may be required for efficient virus replication in macrophages. This African swine fever virus (isolate Pig/Kenya/KEN-50/1950) (ASFV) protein is Protein MGF 360-15R.